The chain runs to 874 residues: S-layer protein (874 aa).

A signal peptide spans 1-30 (MAKTNSYKKVIAGTMTAAMVAGVVSPVAAA). SLH domains follow at residues 31-93 (GKSF…NAQP), 94-151 (SFKD…KVDG), and 152-214 (TLVT…ENSD).

The protein localises to the secreted. Its subcellular location is the cell wall. It is found in the S-layer. The S-layer is a paracrystalline mono-layered assembly of proteins which coat the surface of bacteria. The sequence is that of S-layer protein from Bacillus licheniformis.